A 637-amino-acid chain; its full sequence is Keratin, type II cytoskeletal 1 (637 aa).

Positions 1–187 (MSLQCSSRSL…DPQIQKVKSQ (187 aa)) are head. At Arg12 the chain carries Omega-N-methylarginine. 2 positions are modified to phosphoserine: Ser21 and Ser24. Position 49 is an omega-N-methylarginine (Arg49). Ser67 is subject to Phosphoserine. Residues 180–328 (QIQKVKSQER…DIDFFSALYQ (149 aa)) adopt a coiled-coil conformation. The segment at 188–223 (EREQIKSLNDKFASFIDKVRFLEQQNQVLQTKWELL) is coil 1A. The 314-residue stretch at 188–501 (EREQIKSLND…KLLEGEEIRM (314 aa)) folds into the IF rod domain. Positions 224-243 (QQVDTTTRTQNLDPFFENYI) are linker 1. The interval 244–334 (SILRRKVDSL…ALYQMEMSQM (91 aa)) is coil 1B. Lys284 carries the post-translational modification N6,N6-dimethyllysine. The interval 335–358 (QTQISETNVVLSMDNNRSLDLDGI) is linker 12. Phosphoserine is present on Ser352. Residues 359–497 (ISEVKAQYDS…ATYKKLLEGE (139 aa)) form a coil 2 region. A coiled-coil region spans residues 397 to 483 (DSVRNTKMEI…QELMNTKLAL (87 aa)). A tail region spans residues 498–637 (EIRMSGECTP…VSTSYSRGTK (140 aa)). Disordered regions lie at residues 505 to 533 (CTPN…SGGG) and 563 to 637 (YGGG…RGTK). Residues 509–524 (VSVSVSTSHTSMSGSS) are compositionally biased toward low complexity. 3 positions are modified to omega-N-methylarginine: Arg526, Arg585, and Arg607. Positions 563–618 (YGGGSGGGSYGGGSGGGSSGSHRGGSGGGGGSSGGSYGGSSGGGRGGSSSGGGGVK) are enriched in gly residues. A compositionally biased stretch (polar residues) spans 624–637 (TVKFVSTSYSRGTK).

Belongs to the intermediate filament family. Heterotetramer of two type I and two type II keratins. Heterodimer with KRT10. Two heterodimers of KRT1 and KRT10 form a heterotetramer. Forms a heterodimer with KRT14; the interaction is more abundant in the absence of KRT5. Interacts with PLEC isoform 1C, when in a heterodimer with KRT10. Interacts with ITGB1 in the presence of RACK1 and SRC, and with RACK1. Interacts with C1QBP; the association represents a cell surface kininogen receptor. Interacts with EPPK1; interaction is dependent of higher-order structure of intermediate filament. Post-translationally, undergoes deimination of some arginine residues (citrullination). Expressed in the infundibular regions of the ear, the interfollicular epidermis of the back, in the interscale regions containing hair follicles in the tail, and in the soles of the footpads (at protein level).

It localises to the cell membrane. It is found in the cytoplasm. Functionally, may regulate the activity of kinases such as PKC and SRC via binding to integrin beta-1 (ITB1) and the receptor of activated protein C kinase 1 (RACK1). In complex with C1QBP is a high affinity receptor for kininogen-1/HMWK. The chain is Keratin, type II cytoskeletal 1 (Krt1) from Mus musculus (Mouse).